The following is a 285-amino-acid chain: HTH-type transcriptional regulator MurR (285 aa).

Residues 1-77 (MLYLTKIRNA…MALIGEYSAS (77 aa)) form the HTH rpiR-type domain. Residues 37-56 (SRKMAKQLGISQSSIVKFAQ) constitute a DNA-binding region (H-T-H motif). Residues 128–268 (IIEVISKAPF…FVGLVQLNDV (141 aa)) enclose the SIS domain.

Homotetramer.

The protein operates within amino-sugar metabolism; N-acetylmuramate degradation [regulation]. Functionally, represses the expression of the murPQ operon involved in the uptake and degradation of N-acetylmuramic acid (MurNAc). Binds to two adjacent inverted repeats within the operator region. MurNAc 6-phosphate, the substrate of MurQ, is the specific inducer that weakens binding of MurR to the operator. The polypeptide is HTH-type transcriptional regulator MurR (Shigella sonnei (strain Ss046)).